The following is a 68-amino-acid chain: Cx9C motif-containing protein 4 (68 aa).

In terms of domain architecture, CHCH spans 4–46 (KDPCQKQACEIQKCLQANNYLESKCQAVIQELRKCCARYPKGR). Short sequence motifs (cx9C motif) lie at residues 7-17 (CQKQACEIQKC) and 28-38 (CQAVIQELRKC). Intrachain disulfides connect C7–C38, C17–C28, and C39–C50.

Belongs to the CMC4 family. Expressed in many tissues.

The protein resides in the mitochondrion. In Mus musculus (Mouse), this protein is Cx9C motif-containing protein 4 (Cmc4).